The sequence spans 362 residues: L-asparaginase 2-1 (362 aa).

The first 25 residues, 1-25 (MRSLNTLLLSLFVAMSSGAPLLKIR), serve as a signal peptide directing secretion. An N-linked (GlcNAc...) asparagine glycan is attached at Asn-29. Positions 33–359 (PSIKIFGTGG…DQIRSVFSGV (327 aa)) constitute an Asparaginase/glutaminase domain. Thr-43 serves as the catalytic O-isoaspartyl threonine intermediate. Residue Ser-89 coordinates substrate. Residue Asn-93 is glycosylated (N-linked (GlcNAc...) asparagine). 122 to 123 (TD) is a substrate binding site. The N-linked (GlcNAc...) asparagine glycan is linked to Asn-239.

It belongs to the asparaginase 1 family.

It localises to the secreted. The protein resides in the periplasm. It carries out the reaction L-asparagine + H2O = L-aspartate + NH4(+). This Saccharomyces cerevisiae (strain ATCC 204508 / S288c) (Baker's yeast) protein is L-asparaginase 2-1 (ASP3-1).